Consider the following 163-residue polypeptide: Nucleotide-binding protein DET1318 (163 aa).

This sequence belongs to the YajQ family.

Nucleotide-binding protein. The polypeptide is Nucleotide-binding protein DET1318 (Dehalococcoides mccartyi (strain ATCC BAA-2266 / KCTC 15142 / 195) (Dehalococcoides ethenogenes (strain 195))).